A 405-amino-acid chain; its full sequence is Amino sugar nitrososynthase DnmZ (405 aa).

Residues Glu-117 and Arg-332 each contribute to the dTDP site.

It belongs to the acyl-CoA dehydrogenase family. As to quaternary structure, homotetramer. It depends on FAD as a cofactor.

It functions in the pathway antibiotic biosynthesis. Its function is as follows. Nitrososynthase involved in the biosynthesis of baumycin. Catalyzes the double-oxidation of TDP-L-epi-vancosamine to TDP-L-epi-vancosonitrose. The rapid turnover of TDP-L-epi-vancosamine suggests that this compound, or a closely related analog, is the natural substrate for DnmZ. Can also catalyze the double-oxidation of TDP-L-evernosamine to TDP-L-evernitrosose. This Streptomyces peucetius protein is Amino sugar nitrososynthase DnmZ.